The following is a 700-amino-acid chain: Pentatricopeptide repeat-containing protein At3g26540 (700 aa).

PPR repeat units lie at residues 95–125, 126–160, 161–195, 196–226, 227–261, 262–296, 297–327, 328–362, 363–389, 394–428, 429–459, 461–495, 497–529, 530–560, 561–595, 596–626, and 632–662; these read PIFLLNRAIEAYGKCGCVDDARELFEEMPER, DGGSWNAVITACAQNGVSDEVFRMFRRMNRDGVRA, TETSFAGVLKSCGLILDLRLLRQLHCAVVKYGYSG, NVDLETSIVDVYGKCRVMSDARRVFDEIVNP, SDVSWNVIVRRYLEMGFNDEAVVMFFKMLELNVRP, LNHTVSSVMLACSRSLALEVGKVIHAIAVKLSVVA, DTVVSTSVFDMYVKCDRLESARRVFDQTRSK, DLKSWTSAMSGYAMSGLTREARELFDLMPERNIVS, WNAMLGGYVHAHEWDEALDFLTLMRQE, DNVTLVWILNVCSGISDVQMGKQAHGFIYRHGYDT, NVIVANALLDMYGKCGTLQSANIWFRQMSEL, DEVSWNALLTGVARVGRSEQALSFFEGMQVEAKPS, YTLATLLAGCANIPALNLGKAIHGFLIRDGYKI, DVVIRGAMVDMYSKCRCFDYAIEVFKEAATR, DLILWNSIIRGCCRNGRSKEVFELFMLLENEGVKP, DHVTFLGILQACIREGHVELGFQYFSSMSTK, and QVEHYDCMIELYCKYGCLHQLEEFLLLMPFD.

Belongs to the PPR family. PCMP-A subfamily.

The protein is Pentatricopeptide repeat-containing protein At3g26540 (PCMP-A5) of Arabidopsis thaliana (Mouse-ear cress).